A 190-amino-acid chain; its full sequence is A-type ATP synthase subunit E (190 aa).

The protein belongs to the V-ATPase E subunit family. In terms of assembly, has multiple subunits with at least A(3), B(3), C, D, E, F, H, I and proteolipid K(x).

Its subcellular location is the cell membrane. Its function is as follows. Component of the A-type ATP synthase that produces ATP from ADP in the presence of a proton gradient across the membrane. The chain is A-type ATP synthase subunit E from Pyrobaculum neutrophilum (strain DSM 2338 / JCM 9278 / NBRC 100436 / V24Sta) (Thermoproteus neutrophilus).